The chain runs to 113 residues: Nucleoid-associated protein PMT_0025 (113 aa).

Belongs to the YbaB/EbfC family. As to quaternary structure, homodimer.

The protein resides in the cytoplasm. Its subcellular location is the nucleoid. Functionally, binds to DNA and alters its conformation. May be involved in regulation of gene expression, nucleoid organization and DNA protection. The polypeptide is Nucleoid-associated protein PMT_0025 (Prochlorococcus marinus (strain MIT 9313)).